The primary structure comprises 681 residues: MAMASAMDLSSPPTFFLSGTSTSSPSLRRLSSISVSGFRRHSNRKLQILCQATAGTEPQSGLSVSGSKLAARSGQDRLLKVPISNIRNFSIIAHIDHGKSTLADKLLQVTGTVQNRDMKEQFLDNMDLERERGITIKLQAARMRYVYEDTPFCLNLIDTPGHVDFSYEVSRSLAACEGALLVVDASQGVEAQTLANVYLALENNLEIIPVLNKIDLPGAEPEKVLREIEEVIGLDCSKAIFCSAKEGIGITEILDAIVQRIPAPLDTAGKPLRALIFDSYYDPYRGVIVYFRVIDGKVKKGDRIFFMASGKDYFADEVGVLSPNQIQVDELYAGEVGYIAASVRSVADARVGDTITHYSRKAESSLPGYEEATPMVFCGLFPVDADQFPDLRDALEKLQLNDAALKFEPETSSAMGFGFRCGFLGLLHMEIVQERLEREYNLNLITTAPSVVYRVNSVNGDTTLCSNPSRLPDPGQRKSVEEPYVKIELLTPKDYIGALMELAQERRGEFKEMKYIAENRASILYELPLAEMVGDFFDQLKSRTKGYASMEYSVIGYRESDLIKLDILINAEMVEPLSTIVHRDKAYSVGRALTQKLKELIPRQMFKVPIQACIGSKVIASEALSAIRKDVLAKCYGGDISRKKKLLKKQAAGKKRMKAIGRVDVPQEAFMAVLKLEREVL.

Residues 1-51 (MAMASAMDLSSPPTFFLSGTSTSSPSLRRLSSISVSGFRRHSNRKLQILCQ) constitute a chloroplast transit peptide. The region spanning 84–265 (SNIRNFSIIA…AIVQRIPAPL (182 aa)) is the tr-type G domain. GTP contacts are provided by residues 93 to 100 (AHIDHGKS), 158 to 162 (DTPGH), and 212 to 215 (NKID).

Belongs to the TRAFAC class translation factor GTPase superfamily. Classic translation factor GTPase family. LepA subfamily.

The protein resides in the plastid. Its subcellular location is the chloroplast. The catalysed reaction is GTP + H2O = GDP + phosphate + H(+). Functionally, promotes chloroplast protein synthesis. May act as a fidelity factor of the translation reaction, by catalyzing a one-codon backward translocation of tRNAs on improperly translocated ribosomes. This is Translation factor GUF1 homolog, chloroplastic from Arabidopsis thaliana (Mouse-ear cress).